Consider the following 358-residue polypeptide: Golgi-resident adenosine 3',5'-bisphosphate 3'-phosphatase (358 aa).

N-acetylmethionine is present on Met1. Residues 1-12 are Cytoplasmic-facing; that stretch reads MAPMGIRLSPLG. A helical membrane pass occupies residues 13–33; it reads VAVFCLLGLGVLYHLYSGFLA. Topologically, residues 34–358 are lumenal; the sequence is GRFSLFGLGG…KLPDLEKMGH (325 aa). The segment at 85-106 is disordered; the sequence is RESNVLHEKSKGKTREGADDKM. The active-site Proton acceptor is the Asp110. Mg(2+)-binding residues include Glu133, Asp174, Leu176, and Asp177. Thr179 serves as the catalytic Proton acceptor. AMP-binding residues include Ser242 and His245. N-linked (GlcNAc...) asparagine glycosylation is present at Asn259. The AMP site is built by Gly268 and Lys272. Mg(2+) is bound at residue Asp300.

This sequence belongs to the inositol monophosphatase superfamily. It depends on Mg(2+) as a cofactor. Post-translationally, contains N-linked glycan resistant to endoglycosydase H.

It is found in the golgi apparatus. It localises to the trans-Golgi network membrane. It carries out the reaction adenosine 3',5'-bisphosphate + H2O = AMP + phosphate. It functions in the pathway sulfur metabolism. Its activity is regulated as follows. Strongly inhibited by lithium. Functionally, exhibits 3'-nucleotidase activity toward adenosine 3',5'-bisphosphate (PAP), namely hydrolyzes adenosine 3',5'-bisphosphate into adenosine 5'-monophosphate (AMP) and a phosphate. May play a role in the formation of skeletal elements derived through endochondral ossification, possibly by clearing adenosine 3',5'-bisphosphate produced by Golgi sulfotransferases during glycosaminoglycan sulfation. Has no activity toward 3'-phosphoadenosine 5'-phosphosulfate (PAPS) or inositol phosphate (IP) substrates including I(1)P, I(1,4)P2, I(1,3,4)P3, I(1,4,5)P3 and I(1,3,4,5)P4. This chain is Golgi-resident adenosine 3',5'-bisphosphate 3'-phosphatase (BPNT2), found in Callithrix jacchus (White-tufted-ear marmoset).